Reading from the N-terminus, the 152-residue chain is UPF0178 protein SaurJH9_0705 (152 aa).

This sequence belongs to the UPF0178 family.

The chain is UPF0178 protein SaurJH9_0705 from Staphylococcus aureus (strain JH9).